The primary structure comprises 607 residues: DNA mismatch repair protein MutL (607 aa).

It belongs to the DNA mismatch repair MutL/HexB family.

Its function is as follows. This protein is involved in the repair of mismatches in DNA. It is required for dam-dependent methyl-directed DNA mismatch repair. May act as a 'molecular matchmaker', a protein that promotes the formation of a stable complex between two or more DNA-binding proteins in an ATP-dependent manner without itself being part of a final effector complex. The protein is DNA mismatch repair protein MutL of Paramagnetospirillum magneticum (strain ATCC 700264 / AMB-1) (Magnetospirillum magneticum).